A 324-amino-acid polypeptide reads, in one-letter code: Fructose-1,6-bisphosphatase class 1 (324 aa).

E88, D107, L109, and D110 together coordinate Mg(2+). Substrate-binding positions include 110 to 113 (DGSS), N199, and K265. E271 contributes to the Mg(2+) binding site.

This sequence belongs to the FBPase class 1 family. As to quaternary structure, homotetramer. It depends on Mg(2+) as a cofactor.

Its subcellular location is the cytoplasm. It catalyses the reaction beta-D-fructose 1,6-bisphosphate + H2O = beta-D-fructose 6-phosphate + phosphate. The protein operates within carbohydrate biosynthesis; gluconeogenesis. In Neisseria gonorrhoeae (strain ATCC 700825 / FA 1090), this protein is Fructose-1,6-bisphosphatase class 1.